The chain runs to 427 residues: Serine--tRNA ligase (427 aa).

231–233 (TAE) provides a ligand contact to L-serine. 262 to 264 (RSE) contributes to the ATP binding site. Glu-285 serves as a coordination point for L-serine. 349–352 (EISS) contributes to the ATP binding site. L-serine is bound at residue Ser-385.

It belongs to the class-II aminoacyl-tRNA synthetase family. Type-1 seryl-tRNA synthetase subfamily. As to quaternary structure, homodimer. The tRNA molecule binds across the dimer.

The protein resides in the cytoplasm. It catalyses the reaction tRNA(Ser) + L-serine + ATP = L-seryl-tRNA(Ser) + AMP + diphosphate + H(+). The enzyme catalyses tRNA(Sec) + L-serine + ATP = L-seryl-tRNA(Sec) + AMP + diphosphate + H(+). It participates in aminoacyl-tRNA biosynthesis; selenocysteinyl-tRNA(Sec) biosynthesis; L-seryl-tRNA(Sec) from L-serine and tRNA(Sec): step 1/1. Functionally, catalyzes the attachment of serine to tRNA(Ser). Is also able to aminoacylate tRNA(Sec) with serine, to form the misacylated tRNA L-seryl-tRNA(Sec), which will be further converted into selenocysteinyl-tRNA(Sec). The protein is Serine--tRNA ligase of Brucella canis (strain ATCC 23365 / NCTC 10854 / RM-666).